The sequence spans 2785 residues: Testis-expressed protein 15 (2785 aa).

The segment covering 262–274 (SSSFPSSLSNAFS) has biased composition (low complexity). 8 disordered regions span residues 262–331 (SSSF…PSSD), 596–620 (EQRD…SEKQ), 661–683 (NGKP…APND), 904–924 (TEST…GMCS), 943–1064 (VQES…QGRI), 2276–2458 (NRQE…TNDK), 2470–2511 (DIDA…LVPD), and 2571–2601 (TQPI…GNSA). Positions 275-286 (DVRKQKHSEEQV) are enriched in basic and acidic residues. Over residues 314–331 (TCSNDSQGHFSQESPSSD) the composition is skewed to polar residues. Residues 596 to 611 (EQRDDKNPNEAKEHNT) are compositionally biased toward basic and acidic residues. Composition is skewed to polar residues over residues 962–989 (HNTH…TVMN) and 1021–1031 (HASSSRGQNIA). Residues 1033–1042 (KDLREHETHE) show a composition bias toward basic and acidic residues. 8 stretches are compositionally biased toward polar residues: residues 1049–1064 (SHGS…QGRI), 2291–2314 (DSSQ…NISD), 2327–2338 (EVSQGKGNTDTV), 2353–2387 (NIQT…SISA), 2394–2415 (RQSS…CTPK), 2431–2454 (ASLT…SVAE), 2491–2502 (DHTQISPSNLTA), and 2585–2601 (DAPN…GNSA).

This sequence belongs to the TEX15 family. As to quaternary structure, interacts with PIWIL4. Interacts with PIWIL2. As to expression, detected in testis and ovary, and at lower levels in lung and brain.

The protein localises to the cytoplasm. The protein resides in the nucleus. Functionally, required during spermatogenesis for normal chromosome synapsis and meiotic recombination in germ cells. Necessary for formation of DMC1 and RAD51 foci on meiotic chromosomes, suggesting a specific role in DNA double-stranded break repair. Essential executor of PIWIL4-piRNA pathway directed transposon DNA methylation and silencing in the male embryonic germ cells. PIWIL4-piRNA binds to nascent transposon transcripts and interacts with TEX15, which may in turn recruit the epigenetic silencing machinery to the transposon loci. Not required for piRNA biosynthesis. In Mus musculus (Mouse), this protein is Testis-expressed protein 15.